Consider the following 432-residue polypeptide: Adenylosuccinate synthetase (432 aa).

GTP is bound by residues 13 to 19 (GDEGKGK) and 41 to 43 (GHT). The active-site Proton acceptor is Asp14. Residues Asp14 and Gly41 each contribute to the Mg(2+) site. Residues 14 to 17 (DEGK), 39 to 42 (NAGH), Thr130, Arg144, Gln225, Thr240, and Arg304 each bind IMP. His42 (proton donor) is an active-site residue. 300–306 (ATTGRSR) serves as a coordination point for substrate. Residues Arg306, 332–334 (KLD), and 415–417 (STG) contribute to the GTP site.

The protein belongs to the adenylosuccinate synthetase family. In terms of assembly, homodimer. Mg(2+) serves as cofactor.

It is found in the cytoplasm. The catalysed reaction is IMP + L-aspartate + GTP = N(6)-(1,2-dicarboxyethyl)-AMP + GDP + phosphate + 2 H(+). It functions in the pathway purine metabolism; AMP biosynthesis via de novo pathway; AMP from IMP: step 1/2. Its function is as follows. Plays an important role in the de novo pathway of purine nucleotide biosynthesis. Catalyzes the first committed step in the biosynthesis of AMP from IMP. The sequence is that of Adenylosuccinate synthetase from Yersinia pestis bv. Antiqua (strain Antiqua).